The chain runs to 141 residues: Nucleoside diphosphate kinase (141 aa).

ATP is bound by residues Lys9, Phe57, Arg85, Thr91, Arg102, and Asn112. The active-site Pros-phosphohistidine intermediate is the His115.

The protein belongs to the NDK family. As to quaternary structure, homotetramer. Mg(2+) is required as a cofactor.

The protein resides in the cytoplasm. The enzyme catalyses a 2'-deoxyribonucleoside 5'-diphosphate + ATP = a 2'-deoxyribonucleoside 5'-triphosphate + ADP. It carries out the reaction a ribonucleoside 5'-diphosphate + ATP = a ribonucleoside 5'-triphosphate + ADP. In terms of biological role, major role in the synthesis of nucleoside triphosphates other than ATP. The ATP gamma phosphate is transferred to the NDP beta phosphate via a ping-pong mechanism, using a phosphorylated active-site intermediate. The protein is Nucleoside diphosphate kinase of Chlamydia trachomatis serovar L2 (strain ATCC VR-902B / DSM 19102 / 434/Bu).